A 606-amino-acid chain; its full sequence is Aspartate--tRNA(Asp/Asn) ligase (606 aa).

Glutamate 177 contacts L-aspartate. An aspartate region spans residues 201–204 (QLFK). L-aspartate is bound at residue arginine 223. Residues 223–225 (RDE) and glutamine 232 each bind ATP. Histidine 461 contacts L-aspartate. Glutamate 499 provides a ligand contact to ATP. Residue arginine 506 coordinates L-aspartate. Residue 551–554 (GLDR) coordinates ATP.

The protein belongs to the class-II aminoacyl-tRNA synthetase family. Type 1 subfamily. As to quaternary structure, homodimer.

The protein resides in the cytoplasm. It catalyses the reaction tRNA(Asx) + L-aspartate + ATP = L-aspartyl-tRNA(Asx) + AMP + diphosphate. In terms of biological role, aspartyl-tRNA synthetase with relaxed tRNA specificity since it is able to aspartylate not only its cognate tRNA(Asp) but also tRNA(Asn). Reaction proceeds in two steps: L-aspartate is first activated by ATP to form Asp-AMP and then transferred to the acceptor end of tRNA(Asp/Asn). The polypeptide is Aspartate--tRNA(Asp/Asn) ligase (Prochlorococcus marinus (strain NATL2A)).